A 438-amino-acid polypeptide reads, in one-letter code: Putative pectate lyase 14 (438 aa).

Residues 1–26 (MVVARTLFSISATLIIFLALFLHVNA) form the signal peptide. 3 N-linked (GlcNAc...) asparagine glycosylation sites follow: Asn40, Asn46, and Asn73. Ca(2+)-binding residues include Asp236, Asp260, and Asp264. Arg316 is a catalytic residue.

This sequence belongs to the polysaccharide lyase 1 family. Ca(2+) is required as a cofactor.

The catalysed reaction is Eliminative cleavage of (1-&gt;4)-alpha-D-galacturonan to give oligosaccharides with 4-deoxy-alpha-D-galact-4-enuronosyl groups at their non-reducing ends.. It participates in glycan metabolism; pectin degradation; 2-dehydro-3-deoxy-D-gluconate from pectin: step 2/5. This chain is Putative pectate lyase 14, found in Arabidopsis thaliana (Mouse-ear cress).